Here is a 198-residue protein sequence, read N- to C-terminus: Recombination protein RecR (198 aa).

The C4-type zinc finger occupies 57-72 (CTICGHITDTDPCYIC). The 96-residue stretch at 80 to 175 (TTICVVQDPK…KVTRIAHGLP (96 aa)) folds into the Toprim domain.

This sequence belongs to the RecR family.

In terms of biological role, may play a role in DNA repair. It seems to be involved in an RecBC-independent recombinational process of DNA repair. It may act with RecF and RecO. The chain is Recombination protein RecR from Geobacillus kaustophilus (strain HTA426).